We begin with the raw amino-acid sequence, 1119 residues long: Translation initiation factor IF-2 (1119 aa).

Disordered regions lie at residues 64-463 (SIKK…TSGY) and 477-507 (RPKK…RQRQ). The span at 70–102 (IKKDNYKQNKEDKSSLISSVEEKPFKDNPEKKP) shows a compositional bias: basic and acidic residues. Polar residues-rich tracts occupy residues 116–153 (IISN…QNLN) and 182–212 (KNTT…KPDQ). Positions 213–224 (NSSKSKTKNINN) are enriched in low complexity. Composition is skewed to polar residues over residues 242 to 257 (NKQN…QTVP), 281 to 297 (FNRQ…SSNK), 319 to 328 (FNRQVNTNRS), and 375 to 387 (QVIN…NSET). Over residues 421 to 435 (GKTDWDDSAKLEALR) the composition is skewed to basic and acidic residues. Positions 493–507 (KQFKKKKKETTRQRQ) are enriched in basic residues. The tr-type G domain maps to 610–782 (KRPPVITVMG…ILLVSEVEDL (173 aa)). The G1 stretch occupies residues 619-626 (GHVDHGKT). GTP is bound at residue 619–626 (GHVDHGKT). Residues 644-648 (GITQH) form a G2 region. Positions 669–672 (DTPG) are G3. Residues 669–673 (DTPGH) and 723–726 (NKID) contribute to the GTP site. The segment at 723–726 (NKID) is G4. Positions 759 to 761 (SAI) are G5.

This sequence belongs to the TRAFAC class translation factor GTPase superfamily. Classic translation factor GTPase family. IF-2 subfamily.

It is found in the cytoplasm. Functionally, one of the essential components for the initiation of protein synthesis. Protects formylmethionyl-tRNA from spontaneous hydrolysis and promotes its binding to the 30S ribosomal subunits. Also involved in the hydrolysis of GTP during the formation of the 70S ribosomal complex. This Prochlorococcus marinus (strain MIT 9215) protein is Translation initiation factor IF-2.